Here is a 637-residue protein sequence, read N- to C-terminus: Probable polypeptide N-acetylgalactosaminyltransferase 8 (637 aa).

Residues 1–6 (MMFWRK) lie on the Cytoplasmic side of the membrane. Residues 7–29 (LPKALFIGLTLAIAVNLLLVFSS) traverse the membrane as a helical; Signal-anchor for type II membrane protein segment. Residues 30 to 637 (KGTLQNLFTG…VRDWGQTNSQ (608 aa)) lie on the Lumenal side of the membrane. 3 N-linked (GlcNAc...) asparagine glycosylation sites follow: N85, N107, and N160. 5 disulfides stabilise this stretch: C171–C404, C395–C474, C509–C525, C556–C571, and C599–C617. Residues 180–294 (LPSLSVILIF…VGWAEPILAR (115 aa)) form a catalytic subdomain A region. Substrate contacts are provided by D221 and R255. Positions 278, 280, and 409 each coordinate Mn(2+). The interval 351-412 (PVKSPSIMGI…PCSRIAHLER (62 aa)) is catalytic subdomain B. Residues R412 and Y417 each coordinate substrate. The 139-residue stretch at 496 to 634 (GYGRMKNLLD…QHTVRDWGQT (139 aa)) folds into the Ricin B-type lectin domain.

It belongs to the glycosyltransferase 2 family. GalNAc-T subfamily. It depends on Mn(2+) as a cofactor. Widely expressed. Expressed in heart, skeletal muscle, kidney, liver, small intestine and placenta. Weakly expressed in colon, thymus, spleen, lung and leukocyte.

The protein resides in the golgi apparatus membrane. The enzyme catalyses L-seryl-[protein] + UDP-N-acetyl-alpha-D-galactosamine = a 3-O-[N-acetyl-alpha-D-galactosaminyl]-L-seryl-[protein] + UDP + H(+). It catalyses the reaction L-threonyl-[protein] + UDP-N-acetyl-alpha-D-galactosamine = a 3-O-[N-acetyl-alpha-D-galactosaminyl]-L-threonyl-[protein] + UDP + H(+). Its pathway is protein modification; protein glycosylation. Its function is as follows. Probably catalyzes the initial reaction in O-linked oligosaccharide biosynthesis, the transfer of an N-acetyl-D-galactosamine residue to a serine or threonine residue on the protein receptor. This is Probable polypeptide N-acetylgalactosaminyltransferase 8 (GALNT8) from Homo sapiens (Human).